The primary structure comprises 325 residues: Elongation factor P--(R)-beta-lysine ligase (325 aa).

Serine 76 to glutamate 78 is a binding site for substrate. ATP contacts are provided by residues arginine 100 to glutamate 102 and asparagine 109. Tyrosine 118 contacts substrate. Residue glutamate 244–leucine 245 participates in ATP binding. Glutamate 251 is a substrate binding site. Glycine 300 serves as a coordination point for ATP.

The protein belongs to the class-II aminoacyl-tRNA synthetase family. EpmA subfamily. In terms of assembly, homodimer.

It carries out the reaction D-beta-lysine + L-lysyl-[protein] + ATP = N(6)-((3R)-3,6-diaminohexanoyl)-L-lysyl-[protein] + AMP + diphosphate + H(+). Functionally, with EpmB is involved in the beta-lysylation step of the post-translational modification of translation elongation factor P (EF-P). Catalyzes the ATP-dependent activation of (R)-beta-lysine produced by EpmB, forming a lysyl-adenylate, from which the beta-lysyl moiety is then transferred to the epsilon-amino group of a conserved specific lysine residue in EF-P. The chain is Elongation factor P--(R)-beta-lysine ligase from Sodalis glossinidius (strain morsitans).